We begin with the raw amino-acid sequence, 290 residues long: Elongation factor Ts (290 aa).

The involved in Mg(2+) ion dislocation from EF-Tu stretch occupies residues 79-82; that stretch reads TDFV.

Belongs to the EF-Ts family.

It localises to the cytoplasm. Associates with the EF-Tu.GDP complex and induces the exchange of GDP to GTP. It remains bound to the aminoacyl-tRNA.EF-Tu.GTP complex up to the GTP hydrolysis stage on the ribosome. This is Elongation factor Ts from Pseudoalteromonas atlantica (strain T6c / ATCC BAA-1087).